We begin with the raw amino-acid sequence, 532 residues long: Cilia- and flagella-associated protein 97 (532 aa).

At serine 19 the chain carries Phosphoserine. Disordered stretches follow at residues 28 to 83, 116 to 263, 306 to 333, 398 to 421, and 485 to 532; these read ETNS…PVEN, IPNR…TPDI, KAAK…SLDH, LSRQ…PPKL, and GQYS…TAWL. Positions 35-49 are enriched in basic and acidic residues; the sequence is KQNDDPKERIDKDTK. A compositionally biased stretch (polar residues) spans 50 to 63; it reads NVNSNTGMQTTENY. The segment covering 67–82 has biased composition (basic and acidic residues); it reads KGNERNVKFPPEHPVE. Residues 127–139 are compositionally biased toward acidic residues; that stretch reads GEDDYYTDGEESS. Position 133 is a phosphothreonine (threonine 133). Serine 138 and serine 139 each carry phosphoserine. Low complexity-rich tracts occupy residues 170–185 and 194–205; these read SSSS…SGSG and DSHLSDSSPSSK. Serine 218 is modified (phosphoserine). The segment covering 227–239 has biased composition (polar residues); sequence IKSTETQPSSTTP. Serine 248 carries the phosphoserine modification. Positions 253–263 are enriched in polar residues; it reads TDVSPLSTPDI. Positions 320-329 are enriched in low complexity; sequence SSKSSSVLDS. Serine 330 carries the phosphoserine modification. Positions 374-450 form a coiled coil; the sequence is GKNYSFTREE…ALLKRLEAVK (77 aa). Residues 493–503 show a composition bias toward polar residues; it reads SRTSSATSGLS.

It belongs to the CFAP97 family.

The protein is Cilia- and flagella-associated protein 97 of Homo sapiens (Human).